The sequence spans 114 residues: Putative neurotoxin 7 (114 aa).

Belongs to the scolopendra neurotoxin 8 family. In terms of processing, contains 3 disulfide bonds. As to expression, expressed by the venom gland.

It localises to the secreted. This chain is Putative neurotoxin 7, found in Scolopendra mutilans (Chinese red-headed centipede).